We begin with the raw amino-acid sequence, 364 residues long: Transcription factor IIIA (364 aa).

9 consecutive C2H2-type zinc fingers follow at residues 38-62 (FICS…LCKH), 68-92 (FVCD…VLIH), 98-123 (FVCA…ERKH), 130-154 (YVCS…QCQH), 160-184 (FRCT…GKVH), 187-211 (YLCQ…REAH), 215-237 (ITCN…MKTH), 244-269 (YRCP…LSFH), and 275-299 (FVCE…SVVH). Residues 299 to 364 (HDPDKKRMKL…PPPAALLTVC (66 aa)) form a disordered region. Low complexity predominate over residues 338–352 (SLPNASAESSSSPEA).

The protein resides in the nucleus. In terms of biological role, involved in ribosomal large subunit biogenesis. Binds the approximately 50 base pairs internal control region (ICR) of 5S ribosomal RNA genes. It is required for their RNA polymerase III-dependent transcription and may also maintain the transcription of other genes. Also binds the transcribed 5S RNA's. In Mus musculus (Mouse), this protein is Transcription factor IIIA (Gtf3a).